The primary structure comprises 208 residues: Probable GTP-binding protein EngB (208 aa).

Positions 23-205 (LTSEMVILGR…RQTLLKYLLT (183 aa)) constitute an EngB-type G domain. GTP-binding positions include 31–38 (GRSNVGKS), 57–61 (GKTRL), 84–87 (DLPG), 154–157 (TKFD), and 182–184 (FNA). 2 residues coordinate Mg(2+): Ser38 and Thr59.

Belongs to the TRAFAC class TrmE-Era-EngA-EngB-Septin-like GTPase superfamily. EngB GTPase family. Mg(2+) serves as cofactor.

Its function is as follows. Necessary for normal cell division and for the maintenance of normal septation. The polypeptide is Probable GTP-binding protein EngB (Helicobacter pylori (strain J99 / ATCC 700824) (Campylobacter pylori J99)).